Reading from the N-terminus, the 549-residue chain is Glucose-6-phosphate isomerase (549 aa).

Glutamate 355 functions as the Proton donor in the catalytic mechanism. Residues histidine 386 and lysine 514 contribute to the active site.

The protein belongs to the GPI family.

It is found in the cytoplasm. The enzyme catalyses alpha-D-glucose 6-phosphate = beta-D-fructose 6-phosphate. It functions in the pathway carbohydrate biosynthesis; gluconeogenesis. It participates in carbohydrate degradation; glycolysis; D-glyceraldehyde 3-phosphate and glycerone phosphate from D-glucose: step 2/4. Its function is as follows. Catalyzes the reversible isomerization of glucose-6-phosphate to fructose-6-phosphate. The polypeptide is Glucose-6-phosphate isomerase (Salmonella enteritidis PT4 (strain P125109)).